The sequence spans 1307 residues: tRNA(adenine(34)) deaminase, chloroplastic (1307 aa).

The N-terminal 55 residues, 1–55 (MFNTYTNSLQWPIRSRNQQDYCSLLPERSESYKLSKAYTSSRCYCVSSRSSCCCC), are a transit peptide targeting the chloroplast. Disordered regions lie at residues 245–377 (EYIG…ESTG), 439–458 (SSED…SSQE), 544–563 (HNPL…SHTS), 576–618 (EKRL…GQTT), 753–807 (GVIN…ATEG), 837–957 (SRAG…EEGG), and 975–1073 (LPSR…SVSA). The span at 267-278 (SSCSSYYSLASS) shows a compositional bias: low complexity. Residues 280–309 (EFESDTEDQEEDVEIYRENVRSSEKKVVDQ) adopt a coiled-coil conformation. A compositionally biased stretch (acidic residues) spans 281–292 (FESDTEDQEEDV). Over residues 293–321 (EIYRENVRSSEKKVVDQSAKRLKSRKEAS) the composition is skewed to basic and acidic residues. Residues 367–377 (QTENRVSESTG) show a composition bias toward polar residues. The segment covering 439–448 (SSEDRVSEMR) has biased composition (basic and acidic residues). 2 stretches are compositionally biased toward polar residues: residues 546–563 (PLQT…SHTS) and 582–591 (QGSTTAVQSD). Composition is skewed to basic and acidic residues over residues 592–615 (SKVE…KKDG) and 760–771 (EEQRAESNQLKR). Residues 852-863 (SSPNESVSSATW) show a composition bias toward polar residues. Over residues 866 to 883 (GREHDGSSDDNTKGDKVL) the composition is skewed to basic and acidic residues. 3 stretches are compositionally biased toward polar residues: residues 895 to 907 (VGQT…SEYP), 924 to 947 (SSPS…SGNQ), and 1045 to 1073 (SGSS…SVSA). The 123-residue stretch at 1108–1230 (TVDEIFMREA…RLFPGGEGNG (123 aa)) folds into the CMP/dCMP-type deaminase domain. His1159 lines the Zn(2+) pocket. Glu1161 serves as the catalytic Proton donor. Zn(2+) is bound by residues Cys1189 and Cys1192. The disordered stretch occupies residues 1268–1293 (QLRRKKKDKNSDPPTPTDHHHHHLPK).

The protein belongs to the cytidine and deoxycytidylate deaminase family. As to quaternary structure, homodimer. Requires Zn(2+) as cofactor.

The protein localises to the plastid. It is found in the chloroplast. The enzyme catalyses adenosine(34) in tRNA + H2O + H(+) = inosine(34) in tRNA + NH4(+). Deaminates adenosines to inosines in tRNA-Arg(ACG). Exclusively involved in A-to-I editing of the prokaryote-type chloroplast-tRNA and not involved in C-to-U editing. This is tRNA(adenine(34)) deaminase, chloroplastic (TADA) from Arabidopsis thaliana (Mouse-ear cress).